Reading from the N-terminus, the 459-residue chain is Limonoid 7-O-acetyltransferse (459 aa).

Residues His167 and Asp391 each act as proton acceptor in the active site.

Belongs to the plant acyltransferase family. Monomer. Expressed in maturing fruits and in juice vesicles.

It carries out the reaction (1S)-1-acetoxy-luvungin A + acetyl-CoA = (1S)-1,7-diacetoxy-luvungin A + CoA. It functions in the pathway secondary metabolite biosynthesis; terpenoid biosynthesis. In terms of biological role, acetyltransferase involved in the biosynthesis of limonoids triterpene natural products such as limonin, a compound with insecticidal activity responsible for the bitter taste in citrus. Catalyzes the formation of (1S)-1,7-diacetoxy-luvungin A from (1S)-1-acetoxy-luvungin A. This chain is Limonoid 7-O-acetyltransferse, found in Citrus sinensis (Sweet orange).